Reading from the N-terminus, the 274-residue chain is MLSVATRSGPFAPVLSATSRGVAGALRPLVQATVPATPEQPVLNLKRPFLSRESLSGQAVRRPLVASVGLNVPASVCYSHTDVRVPDFSEYRRLEVLDSTKSSRESSEARKGFSYLVTGVTTVGVAYAAKNVVTQFVSSMSASADVLALAKIEIKLSDIPEGKNMTFKWRGKPLFVRHRTQKEIEQEAAVELSQLRDPQHDLDRVKKPEWVILIGVCTHLGCVPIANAGDFGGYYCPCHGSHYDASGRIRLGPAPLNLEVPIYEFTSDDMVIVG.

Residues 79 to 103 (SHTDVRVPDFSEYRRLEVLDSTKSS) are Mitochondrial matrix-facing. A helical transmembrane segment spans residues 104 to 140 (RESSEARKGFSYLVTGVTTVGVAYAAKNVVTQFVSSM). Over 141–274 (SASADVLALA…FTSDDMVIVG (134 aa)) the chain is Mitochondrial intermembrane. Positions 187-272 (EAAVELSQLR…YEFTSDDMVI (86 aa)) constitute a Rieske domain. Residues cysteine 217, histidine 219, cysteine 236, histidine 239, and serine 241 each contribute to the [2Fe-2S] cluster site. Cysteine 222 and cysteine 238 are oxidised to a cystine.

Belongs to the Rieske iron-sulfur protein family. Component of the ubiquinol-cytochrome c oxidoreductase (cytochrome b-c1 complex, complex III, CIII), a multisubunit enzyme composed of 11 subunits. The complex is composed of 3 respiratory subunits cytochrome b, cytochrome c1 and Rieske protein UQCRFS1, 2 core protein subunits UQCRC1/QCR1 and UQCRC2/QCR2, and 6 low-molecular weight protein subunits UQCRH/QCR6, UQCRB/QCR7, UQCRQ/QCR8, UQCR10/QCR9, UQCR11/QCR10 and subunit 9, the cleavage product of Rieske protein UQCRFS1. The complex exists as an obligatory dimer and forms supercomplexes (SCs) in the inner mitochondrial membrane with NADH-ubiquinone oxidoreductase (complex I, CI) and cytochrome c oxidase (complex IV, CIV), resulting in different assemblies (supercomplex SCI(1)III(2)IV(1) and megacomplex MCI(2)III(2)IV(2)). Incorporation of the Rieske protein UQCRFS1 is the penultimate step in complex III assembly. Interacts with TTC19, which is involved in the clearance of UQCRFS1 fragments. As to quaternary structure, component of the ubiquinol-cytochrome c oxidoreductase (cytochrome b-c1 complex, complex III, CIII). Subunit 9 corresponds to the mitochondrial targeting sequence (MTS) of Rieske protein UQCRFS1. It is retained after processing and incorporated inside complex III, where it remains bound to the complex and localizes between the 2 core subunits UQCRC1/QCR1 and UQCRC2/QCR2. [2Fe-2S] cluster is required as a cofactor. Proteolytic processing is necessary for the correct insertion of UQCRFS1 in the complex III dimer. Several fragments are generated during UQCRFS1 insertion, most probably due to the endogenous matrix-processing peptidase (MPP) activity of the 2 core protein subunits UQCRC1/QCR1 and UQCRC2/QCR2, which are homologous to the 2 mitochondrial-processing peptidase (MPP) subunits beta-MPP and alpha-MPP respectively. The action of the protease is also necessary for the clearance of the UQCRFS1 fragments.

It localises to the mitochondrion inner membrane. The catalysed reaction is a quinol + 2 Fe(III)-[cytochrome c](out) = a quinone + 2 Fe(II)-[cytochrome c](out) + 2 H(+)(out). Functionally, component of the ubiquinol-cytochrome c oxidoreductase, a multisubunit transmembrane complex that is part of the mitochondrial electron transport chain which drives oxidative phosphorylation. The respiratory chain contains 3 multisubunit complexes succinate dehydrogenase (complex II, CII), ubiquinol-cytochrome c oxidoreductase (cytochrome b-c1 complex, complex III, CIII) and cytochrome c oxidase (complex IV, CIV), that cooperate to transfer electrons derived from NADH and succinate to molecular oxygen, creating an electrochemical gradient over the inner membrane that drives transmembrane transport and the ATP synthase. The cytochrome b-c1 complex catalyzes electron transfer from ubiquinol to cytochrome c, linking this redox reaction to translocation of protons across the mitochondrial inner membrane, with protons being carried across the membrane as hydrogens on the quinol. In the process called Q cycle, 2 protons are consumed from the matrix, 4 protons are released into the intermembrane space and 2 electrons are passed to cytochrome c. The Rieske protein is a catalytic core subunit containing a [2Fe-2S] iron-sulfur cluster. It cycles between 2 conformational states during catalysis to transfer electrons from the quinol bound in the Q(0) site in cytochrome b to cytochrome c1. Incorporation of UQCRFS1 is the penultimate step in complex III assembly. In terms of biological role, component of the ubiquinol-cytochrome c oxidoreductase (cytochrome b-c1 complex, complex III, CIII). UQCRFS1 undergoes proteolytic processing once it is incorporated in the complex III dimer. One of the fragments, called subunit 9, corresponds to its mitochondrial targeting sequence (MTS). The proteolytic processing is necessary for the correct insertion of UQCRFS1 in the complex III dimer, but the persistence of UQCRFS1-derived fragments may prevent newly imported UQCRFS1 to be processed and assembled into complex III and is detrimental for the complex III structure and function. The polypeptide is Cytochrome b-c1 complex subunit Rieske, mitochondrial (UQCRFS1) (Pongo pygmaeus (Bornean orangutan)).